An 80-amino-acid polypeptide reads, in one-letter code: Keratin-associated protein 6-1 (80 aa).

It belongs to the KRTAP type 6 family. Interacts with hair keratins.

In the hair cortex, hair keratin intermediate filaments are embedded in an interfilamentous matrix, consisting of hair keratin-associated proteins (KRTAP), which are essential for the formation of a rigid and resistant hair shaft through their extensive disulfide bond cross-linking with abundant cysteine residues of hair keratins. The matrix proteins include the high-sulfur and high-glycine-tyrosine keratins. The protein is Keratin-associated protein 6-1 (KRTAP6-1) of Oryctolagus cuniculus (Rabbit).